The sequence spans 214 residues: Probable transaldolase (214 aa).

The active-site Schiff-base intermediate with substrate is the lysine 83.

The protein belongs to the transaldolase family. Type 3B subfamily.

The protein localises to the cytoplasm. The enzyme catalyses D-sedoheptulose 7-phosphate + D-glyceraldehyde 3-phosphate = D-erythrose 4-phosphate + beta-D-fructose 6-phosphate. Its pathway is carbohydrate degradation; pentose phosphate pathway; D-glyceraldehyde 3-phosphate and beta-D-fructose 6-phosphate from D-ribose 5-phosphate and D-xylulose 5-phosphate (non-oxidative stage): step 2/3. Transaldolase is important for the balance of metabolites in the pentose-phosphate pathway. In Leptospira borgpetersenii serovar Hardjo-bovis (strain JB197), this protein is Probable transaldolase.